The following is a 332-amino-acid chain: D-glutamate N-acetyltransferase (332 aa).

This sequence belongs to the N-acetyltransferase DgcN family.

The enzyme catalyses D-glutamate + acetyl-CoA = N-acetyl-D-glutamate + CoA + H(+). It carries out the reaction D-aspartate + acetyl-CoA = N-acetyl-D-aspartate + CoA + H(+). The catalysed reaction is D-glutamine + acetyl-CoA = N-acetyl-D-glutamine + CoA + H(+). It functions in the pathway amino-acid degradation. N-acetyltransferase involved in a deamination-independent D-glutamate degradation pathway, named the DgcN-DgcA pathway. Catalyzes the transfer of the acetyl moiety from acetyl-CoA to D-glutamate to generate N-acetyl-D-glutamate. Can also acetylate D-aspartate and D-glutamine, with lower efficiency. Has low activity with D-asparagine. Cannot use succinyl-CoA. In Pseudoalteromonas sp, this protein is D-glutamate N-acetyltransferase.